A 100-amino-acid polypeptide reads, in one-letter code: Small ribosomal subunit protein uS14c (100 aa).

This sequence belongs to the universal ribosomal protein uS14 family. In terms of assembly, part of the 30S ribosomal subunit.

The protein localises to the plastid. The protein resides in the chloroplast. Its function is as follows. Binds 16S rRNA, required for the assembly of 30S particles. In Ceratophyllum demersum (Rigid hornwort), this protein is Small ribosomal subunit protein uS14c.